A 157-amino-acid chain; its full sequence is S-ribosylhomocysteine lyase (157 aa).

The Fe cation site is built by His-53, His-57, and Cys-124.

The protein belongs to the LuxS family. As to quaternary structure, homodimer. It depends on Fe cation as a cofactor.

It carries out the reaction S-(5-deoxy-D-ribos-5-yl)-L-homocysteine = (S)-4,5-dihydroxypentane-2,3-dione + L-homocysteine. In terms of biological role, involved in the synthesis of autoinducer 2 (AI-2) which is secreted by bacteria and is used to communicate both the cell density and the metabolic potential of the environment. The regulation of gene expression in response to changes in cell density is called quorum sensing. Catalyzes the transformation of S-ribosylhomocysteine (RHC) to homocysteine (HC) and 4,5-dihydroxy-2,3-pentadione (DPD). In Borrelia garinii subsp. bavariensis (strain ATCC BAA-2496 / DSM 23469 / PBi) (Borreliella bavariensis), this protein is S-ribosylhomocysteine lyase.